We begin with the raw amino-acid sequence, 316 residues long: Acetylglutamate kinase (316 aa).

Substrate is bound by residues G76–G77, R98, and N207.

Belongs to the acetylglutamate kinase family. ArgB subfamily.

The protein resides in the cytoplasm. The catalysed reaction is N-acetyl-L-glutamate + ATP = N-acetyl-L-glutamyl 5-phosphate + ADP. The protein operates within amino-acid biosynthesis; L-arginine biosynthesis; N(2)-acetyl-L-ornithine from L-glutamate: step 2/4. Catalyzes the ATP-dependent phosphorylation of N-acetyl-L-glutamate. The sequence is that of Acetylglutamate kinase from Paenarthrobacter aurescens (strain TC1).